A 261-amino-acid chain; its full sequence is Triosephosphate isomerase (261 aa).

The D-glyceraldehyde 3-phosphate site is built by Asn11 and Lys13. Residue His102 is the Electrophile of the active site. Catalysis depends on Glu174, which acts as the Proton acceptor. 3 residues coordinate D-glyceraldehyde 3-phosphate: Gly180, Leu239, and Gly241.

The protein belongs to the triosephosphate isomerase family. As to quaternary structure, homodimer.

It catalyses the reaction D-glyceraldehyde 3-phosphate = dihydroxyacetone phosphate. Its pathway is carbohydrate biosynthesis; gluconeogenesis. It participates in carbohydrate degradation; glycolysis; D-glyceraldehyde 3-phosphate from glycerone phosphate: step 1/1. Catalyzes the interconversion of glyceraldehyde 3-phosphate and dihydroxyacetone phosphate in the glycolytic and gluconeogenic pathways. The protein is Triosephosphate isomerase of Entamoeba histolytica (strain ATCC 30459 / HM-1:IMSS / ABRM).